The following is a 156-amino-acid chain: SsrA-binding protein (156 aa).

The protein belongs to the SmpB family.

Its subcellular location is the cytoplasm. Required for rescue of stalled ribosomes mediated by trans-translation. Binds to transfer-messenger RNA (tmRNA), required for stable association of tmRNA with ribosomes. tmRNA and SmpB together mimic tRNA shape, replacing the anticodon stem-loop with SmpB. tmRNA is encoded by the ssrA gene; the 2 termini fold to resemble tRNA(Ala) and it encodes a 'tag peptide', a short internal open reading frame. During trans-translation Ala-aminoacylated tmRNA acts like a tRNA, entering the A-site of stalled ribosomes, displacing the stalled mRNA. The ribosome then switches to translate the ORF on the tmRNA; the nascent peptide is terminated with the 'tag peptide' encoded by the tmRNA and targeted for degradation. The ribosome is freed to recommence translation, which seems to be the essential function of trans-translation. The polypeptide is SsrA-binding protein (Renibacterium salmoninarum (strain ATCC 33209 / DSM 20767 / JCM 11484 / NBRC 15589 / NCIMB 2235)).